Consider the following 402-residue polypeptide: Phosphomevalonate dehydratase large subunit (402 aa).

Residues Gly48, Ala49, Ser50, Asn79, and Pro80 each coordinate (R)-5-phosphomevalonate. Cys122 lines the [4Fe-4S] cluster pocket. (R)-5-phosphomevalonate is bound by residues Glu145 and Ser146. [4Fe-4S] cluster contacts are provided by Cys297 and Cys356. Lys377 is a binding site for (R)-5-phosphomevalonate.

It belongs to the AcnX type II large subunit family. Heterodimer composed of a large subunit (PMDh-L) and a small subunit (PMDh-S). The cofactor is [4Fe-4S] cluster.

The enzyme catalyses (R)-5-phosphomevalonate = (2E)-3-methyl-5-phosphooxypent-2-enoate + H2O. It participates in isoprenoid biosynthesis; isopentenyl diphosphate biosynthesis via mevalonate pathway. Neither the addition of 1 mM Mg(2+) nor 1 mM Mn(2+) has a significant effect on the activity, whereas Zn(2+) causes almost complete inactivation. Strongly inhibited by H(2)O(2), but not by EDTA or iodoacetamide. Functionally, component of a hydro-lyase that catalyzes the dehydration of mevalonate 5-phosphate (MVA5P) to form trans-anhydromevalonate 5-phosphate (tAHMP). Involved in the archaeal mevalonate (MVA) pathway, which provides fundamental precursors for isoprenoid biosynthesis, such as isopentenyl diphosphate (IPP) and dimethylallyl diphosphate (DMAPP). The polypeptide is Phosphomevalonate dehydratase large subunit (Aeropyrum pernix (strain ATCC 700893 / DSM 11879 / JCM 9820 / NBRC 100138 / K1)).